Reading from the N-terminus, the 427-residue chain is tRNA(Ile)-lysidine synthase (427 aa).

25–30 (SGGLDS) is a binding site for ATP.

Belongs to the tRNA(Ile)-lysidine synthase family.

Its subcellular location is the cytoplasm. It catalyses the reaction cytidine(34) in tRNA(Ile2) + L-lysine + ATP = lysidine(34) in tRNA(Ile2) + AMP + diphosphate + H(+). Its function is as follows. Ligates lysine onto the cytidine present at position 34 of the AUA codon-specific tRNA(Ile) that contains the anticodon CAU, in an ATP-dependent manner. Cytidine is converted to lysidine, thus changing the amino acid specificity of the tRNA from methionine to isoleucine. In Histophilus somni (strain 2336) (Haemophilus somnus), this protein is tRNA(Ile)-lysidine synthase.